Reading from the N-terminus, the 735-residue chain is Translation factor GUF1 homolog, chloroplastic (735 aa).

Disordered stretches follow at residues 1 to 38 (MAVP…PSTS) and 106 to 126 (PENA…GVDN). The N-terminal 47 residues, 1–47 (MAVPTIPSPACISQSANGSIISTRRSTETNPRQHPSTSYRCAGRVVR), are a transit peptide targeting the chloroplast. Over residues 11 to 38 (CISQSANGSIISTRRSTETNPRQHPSTS) the composition is skewed to polar residues. A compositionally biased stretch (basic and acidic residues) spans 106 to 115 (PENAEKDYSK). The region spanning 137-319 (SNIRNFSIIA…AVVKKIPPPK (183 aa)) is the tr-type G domain. GTP is bound by residues 146–153 (AHIDHGKS), 212–216 (DTPGH), and 266–269 (NKID).

Belongs to the TRAFAC class translation factor GTPase superfamily. Classic translation factor GTPase family. LepA subfamily.

Its subcellular location is the plastid. The protein localises to the chloroplast. The enzyme catalyses GTP + H2O = GDP + phosphate + H(+). Functionally, promotes chloroplast protein synthesis. May act as a fidelity factor of the translation reaction, by catalyzing a one-codon backward translocation of tRNAs on improperly translocated ribosomes. This chain is Translation factor GUF1 homolog, chloroplastic, found in Physcomitrium patens (Spreading-leaved earth moss).